Consider the following 128-residue polypeptide: Large ribosomal subunit protein bL17 (128 aa).

The protein belongs to the bacterial ribosomal protein bL17 family. As to quaternary structure, part of the 50S ribosomal subunit. Contacts protein L32.

In Streptococcus suis (strain 98HAH33), this protein is Large ribosomal subunit protein bL17.